The following is a 95-amino-acid chain: Small ribosomal subunit protein bS6 (95 aa).

It belongs to the bacterial ribosomal protein bS6 family.

Binds together with bS18 to 16S ribosomal RNA. This Desulfitobacterium hafniense (strain DSM 10664 / DCB-2) protein is Small ribosomal subunit protein bS6.